Here is a 206-residue protein sequence, read N- to C-terminus: Amelogenin, Y isoform (206 aa).

The first 16 residues, 1–16 (MGTWILFACLVGAAFA), serve as a signal peptide directing secretion. The tract at residues 118–180 (VPGQQSMTPT…PPLPPMFPLR (63 aa)) is disordered. The segment covering 128 to 142 (QHHQPNLPLPAQQPF) has biased composition (low complexity). The span at 143–180 (QPQPVQPQPHQPMQPQPPVQPMQPLLPQPPLPPMFPLR) shows a compositional bias: pro residues.

The protein belongs to the amelogenin family.

It is found in the secreted. The protein localises to the extracellular space. The protein resides in the extracellular matrix. In terms of biological role, plays a role in biomineralization. Seems to regulate the formation of crystallites during the secretory stage of tooth enamel development. Thought to play a major role in the structural organization and mineralization of developing enamel. The polypeptide is Amelogenin, Y isoform (AMELY) (Homo sapiens (Human)).